The chain runs to 810 residues: E3 ubiquitin-protein ligase RNF10 (810 aa).

Low complexity predominate over residues 1-31 (MPQSSPSAAATASDMDKNSGSSSSSASSGSS). The disordered stretch occupies residues 1–119 (MPQSSPSAAA…SFNGGRRDEV (119 aa)). A Phosphoserine modification is found at Ser-5. A compositionally biased stretch (polar residues) spans 76–92 (NFINQSRRSNSQKSKTF). An interaction with MEOX2 region spans residues 101–185 (GGSSKLFSSS…FNKELFLQAN (85 aa)). A compositionally biased stretch (low complexity) spans 104-113 (SKLFSSSFNG). Phosphoserine occurs at positions 110 and 128. The RING-type zinc-finger motif lies at 225 to 267 (CPICLYPPTAAKITRCGHIFCWACILHYLSLSEKTWSKCPICY). Disordered regions lie at residues 598–623 (KRKR…EENK), 652–674 (DSAL…LSRS), 722–759 (ADVW…PVPS), and 775–810 (LDTP…VHTK). Residues 607 to 623 (AREERRRERRIEMEENK) are compositionally biased toward basic and acidic residues. The segment covering 652–661 (DSALGSTSTE) has biased composition (polar residues). Over residues 662-674 (GRGALSLSPLSRS) the composition is skewed to low complexity. The span at 722–735 (ADVWPKTAPKKDEN) shows a compositional bias: basic and acidic residues. Residues 801-810 (LFSTSVVHTK) are compositionally biased toward polar residues.

The protein belongs to the RNF10 family. Interacts with MEOX2.

The protein localises to the cytoplasm. It is found in the nucleus. The catalysed reaction is S-ubiquitinyl-[E2 ubiquitin-conjugating enzyme]-L-cysteine + [acceptor protein]-L-lysine = [E2 ubiquitin-conjugating enzyme]-L-cysteine + N(6)-ubiquitinyl-[acceptor protein]-L-lysine.. The protein operates within protein modification; protein ubiquitination. E3 ubiquitin-protein ligase that catalyzes monoubiquitination of 40S ribosomal proteins RPS2/us5 and RPS3/us3 in response to ribosome stalling. Part of a ribosome quality control that takes place when ribosomes have stalled during translation initiation (iRQC): RNF10 acts by mediating monoubiquitination of RPS2/us5 and RPS3/us3, promoting their degradation by the proteasome. Also promotes ubiquitination of 40S ribosomal proteins in response to ribosome stalling during translation elongation. The action of RNF10 in iRQC is counteracted by USP10. May also act as a transcriptional factor involved in the regulation of MAG (Myelin-associated glycoprotein) expression. Acts as a regulator of Schwann cell differentiation and myelination. This chain is E3 ubiquitin-protein ligase RNF10 (RNF10), found in Bos taurus (Bovine).